Reading from the N-terminus, the 1317-residue chain is Clustered mitochondria protein homolog (1317 aa).

The region spanning 382 to 626 (DITRSQESYL…RVTPLDVTWQ (245 aa)) is the Clu domain. Basic and acidic residues predominate over residues 669–689 (KAQEEAANKEQSSEVTESKEQ). 2 disordered regions span residues 669–700 (KAQE…EALD) and 939–966 (ANGV…PSRA). TPR repeat units lie at residues 1040–1073 (AKLY…TERT), 1082–1115 (ILAY…WKII), and 1124–1157 (ITTM…CESL). Disordered regions lie at residues 1252–1273 (VQPQ…ANAS) and 1288–1317 (GGDA…KSSA).

Belongs to the CLU family. As to quaternary structure, may associate with the eukaryotic translation initiation factor 3 (eIF-3) complex.

It localises to the cytoplasm. In terms of biological role, mRNA-binding protein involved in proper cytoplasmic distribution of mitochondria. In Neosartorya fischeri (strain ATCC 1020 / DSM 3700 / CBS 544.65 / FGSC A1164 / JCM 1740 / NRRL 181 / WB 181) (Aspergillus fischerianus), this protein is Clustered mitochondria protein homolog.